A 253-amino-acid chain; its full sequence is DnaJ homolog subfamily C member 8 (253 aa).

Ala-2 carries the post-translational modification N-acetylalanine. Ser-35 bears the Phosphoserine mark. The J domain occupies 57–124 (NPFEVLQIDP…QKKRALDVIQ (68 aa)). Position 146 is an N6-acetyllysine (Lys-146). The span at 181-222 (EAKEMHERKRQREEEIEAQEKAKREREWQKNFEESRDGRVDS) shows a compositional bias: basic and acidic residues. The segment at 181 to 253 (EAKEMHERKR…PPKVKMEQRE (73 aa)) is disordered. Short sequence motifs (nuclear localization signal) lie at residues 189–192 (KRQR) and 203–206 (KRER). Position 222 is a phosphoserine (Ser-222). Over residues 231–240 (KGKKEKKNRT) the composition is skewed to basic residues. The essential for polyglutamine aggregation suppression stretch occupies residues 232–253 (GKKEKKNRTFLRPPKVKMEQRE).

As to quaternary structure, interacts with SRPK1. Interacts with HSP70 (HSPA1A or HSPA1B). As to expression, ubiquitous.

The protein localises to the nucleus. In terms of biological role, suppresses polyglutamine (polyQ) aggregation of ATXN3 in neuronal cells. This is DnaJ homolog subfamily C member 8 (DNAJC8) from Homo sapiens (Human).